The chain runs to 412 residues: Mannose-1-phosphate guanylyltransferase regulatory subunit alpha (412 aa).

The tract at residues 6–259 (TKAIILVGGP…VGFWRQIKNA (254 aa)) is substrate-binding domain. The GDP-alpha-D-mannose site is built by Glu88 and Gln255. The interval 281-412 (LKKGNNIIGN…DRNYNNEIIL (132 aa)) is hexapeptide repeat domain.

This sequence belongs to the transferase hexapeptide repeat family. In terms of assembly, component of the GMPPA-GMPPB mannose-1-phosphate guanylyltransferase complex composed of 4 gmppA subunits and 8 gmppB subunits; the complex is organized into three layers, a central layer made up of 2 gmppA dimers sandwiched between two layers each made up of 2 gmppB dimers.

Functionally, regulatory subunit of the GMPPA-GMPPB mannose-1-phosphate guanylyltransferase complex; reduces the catalytic activity of GMPPB when part of the complex. Mediates allosteric feedback inhibition of GMPPB catalytic activity upon binding GDP-alpha-D-mannose. Together with GMPPB regulates GDP-alpha-D-mannose levels. This is Mannose-1-phosphate guanylyltransferase regulatory subunit alpha (gmppA) from Dictyostelium discoideum (Social amoeba).